The chain runs to 392 residues: Formate-dependent phosphoribosylglycinamide formyltransferase (392 aa).

Residues 22-23 (EL) and Glu82 each bind N(1)-(5-phospho-beta-D-ribosyl)glycinamide. ATP contacts are provided by residues Arg114, Lys155, 160–165 (SSGHGQ), 195–198 (EGFI), and Glu203. Residues 119–307 (RLAAEELGLK…QFALHARAIL (189 aa)) form the ATP-grasp domain. Mg(2+) contacts are provided by Glu266 and Glu278. Residues Asp285, Lys355, and 362-363 (RR) each bind N(1)-(5-phospho-beta-D-ribosyl)glycinamide.

The protein belongs to the PurK/PurT family. As to quaternary structure, homodimer.

The protein resides in the cell inner membrane. It catalyses the reaction N(1)-(5-phospho-beta-D-ribosyl)glycinamide + formate + ATP = N(2)-formyl-N(1)-(5-phospho-beta-D-ribosyl)glycinamide + ADP + phosphate + H(+). It participates in purine metabolism; IMP biosynthesis via de novo pathway; N(2)-formyl-N(1)-(5-phospho-D-ribosyl)glycinamide from N(1)-(5-phospho-D-ribosyl)glycinamide (formate route): step 1/1. In terms of biological role, involved in the de novo purine biosynthesis. Catalyzes the transfer of formate to 5-phospho-ribosyl-glycinamide (GAR), producing 5-phospho-ribosyl-N-formylglycinamide (FGAR). Formate is provided by PurU via hydrolysis of 10-formyl-tetrahydrofolate. This chain is Formate-dependent phosphoribosylglycinamide formyltransferase, found in Mannheimia haemolytica (Pasteurella haemolytica).